A 163-amino-acid polypeptide reads, in one-letter code: Large ribosomal subunit protein bL17 (163 aa).

A compositionally biased stretch (low complexity) spans 123–135 (AEASRATRASASK). Residues 123-163 (AEASRATRASASKKAAEEAETEEVVEAPAEETATEEAAEEK) are disordered. A compositionally biased stretch (acidic residues) spans 140–163 (EAETEEVVEAPAEETATEEAAEEK).

This sequence belongs to the bacterial ribosomal protein bL17 family. As to quaternary structure, part of the 50S ribosomal subunit. Contacts protein L32.

This Corynebacterium glutamicum (strain ATCC 13032 / DSM 20300 / JCM 1318 / BCRC 11384 / CCUG 27702 / LMG 3730 / NBRC 12168 / NCIMB 10025 / NRRL B-2784 / 534) protein is Large ribosomal subunit protein bL17.